The primary structure comprises 167 residues: Leptin (167 aa).

A signal peptide spans 1–21; it reads MRCGPLCRFLWLWPYLSCVEA. Cys117 and Cys167 form a disulfide bridge.

This sequence belongs to the leptin family.

It localises to the secreted. Key player in the regulation of energy balance and body weight control. Once released into the circulation, has central and peripheral effects by binding LEPR, found in many tissues, which results in the activation of several major signaling pathways. In the hypothalamus, acts as an appetite-regulating factor that induces a decrease in food intake and an increase in energy consumption by inducing anorexinogenic factors and suppressing orexigenic neuropeptides, also regulates bone mass and secretion of hypothalamo-pituitary-adrenal hormones. In the periphery, increases basal metabolism, influences reproductive function, regulates pancreatic beta-cell function and insulin secretion, is pro-angiogenic for endothelial cell and affects innate and adaptive immunity. In the arcuate nucleus of the hypothalamus, activates by depolarization POMC neurons inducing FOS and SOCS3 expression to release anorexigenic peptides and inhibits by hyperpolarization NPY neurons inducing SOCS3 with a consequent reduction on release of orexigenic peptides. In addition to its known satiety inducing effect, has a modulatory role in nutrient absorption. In the intestine, reduces glucose absorption by enterocytes by activating PKC and leading to a sequential activation of p38, PI3K and ERK signaling pathways which exerts an inhibitory effect on glucose absorption. Acts as a growth factor on certain tissues, through the activation of different signaling pathways increases expression of genes involved in cell cycle regulation such as CCND1, via JAK2-STAT3 pathway, or VEGFA, via MAPK1/3 and PI3K-AKT1 pathways. May also play an apoptotic role via JAK2-STAT3 pathway and up-regulation of BIRC5 expression. Pro-angiogenic, has mitogenic activity on vascular endothelial cells and plays a role in matrix remodeling by regulating the expression of matrix metalloproteinases (MMPs) and tissue inhibitors of metalloproteinases (TIMPs). In innate immunity, modulates the activity and function of neutrophils by increasing chemotaxis and the secretion of oxygen radicals. Increases phagocytosis by macrophages and enhances secretion of pro-inflammatory mediators. Increases cytotoxic ability of NK cells. Plays a pro-inflammatory role, in synergy with IL1B, by inducing NOS2 which promotes the production of IL6, IL8 and Prostaglandin E2, through a signaling pathway that involves JAK2, PI3K, MAP2K1/MEK1 and MAPK14/p38. In adaptive immunity, promotes the switch of memory T-cells towards T helper-1 cell immune responses. Increases CD4(+)CD25(-) T-cell proliferation and reduces autophagy during TCR (T-cell receptor) stimulation, through MTOR signaling pathway activation and BCL2 up-regulation. This is Leptin (LEP) from Canis lupus familiaris (Dog).